The following is a 620-amino-acid chain: Notoamide biosynthesis transcriptional activator notL' (620 aa).

The disordered stretch occupies residues 1-26 (MPPSSKSRRLPPAASDSAASDAQKRR). Positions 33 to 59 (CSACKARKLKCTGAPPCANCVKSRIEC) form a DNA-binding region, zn(2)-C6 fungal-type. The disordered stretch occupies residues 591–620 (ETGAFFLDPDQPSGNSTPIKSETPEGTAIS).

The protein localises to the nucleus. Transcription factor that probably regulates the expression of the gene cluster that mediates the biosynthesis of notoamide, a fungal indole alkaloid that belongs to a family of natural products containing a characteristic bicyclo[2.2.2]diazaoctane core. The protein is Notoamide biosynthesis transcriptional activator notL' of Aspergillus versicolor.